Here is a 375-residue protein sequence, read N- to C-terminus: Beta-1,3-N-acetylglucosaminyltransferase lunatic fringe (375 aa).

Residues 1 to 8 (MLKNWGKK) lie on the Cytoplasmic side of the membrane. The chain crosses the membrane as a helical; Signal-anchor for type II membrane protein span at residues 9-29 (LLLSIVGATLTCLLVLVVDQQ). Residues 30-375 (SRHMLETQSD…TPWCPWKAAY (346 aa)) lie on the Lumenal side of the membrane. Residues 53 to 73 (DLDPANPGDGGDPANSAQDSG) are disordered. Arginine 125 serves as a coordination point for substrate. Asparagine 163 carries N-linked (GlcNAc...) asparagine glycosylation. Intrachain disulfides connect cysteine 164–cysteine 175 and cysteine 193–cysteine 256. Substrate is bound at residue aspartate 197. Aspartate 198 is a Mn(2+) binding site. Aspartate 286 is a catalytic residue. Histidine 310 contributes to the Mn(2+) binding site. A disulfide bridge links cysteine 360 with cysteine 369.

This sequence belongs to the glycosyltransferase 31 family. Mn(2+) is required as a cofactor. It depends on Co(2+) as a cofactor. A soluble form may be derived from the membrane form by proteolytic processing. In terms of tissue distribution, detected in the neural tube, the eye and the otic vesicle, expression coincides with the region that produces the medial, intermediate and lateral neurons.

The protein localises to the golgi apparatus membrane. The catalysed reaction is 3-O-(alpha-L-fucosyl)-L-threonyl-[EGF-like domain protein] + UDP-N-acetyl-alpha-D-glucosamine = 3-O-(N-acetyl-beta-D-glucosaminyl-(1-&gt;3)-alpha-L-fucosyl)-L-threonyl-[EGF-like domain protein] + UDP + H(+). It carries out the reaction 3-O-(alpha-L-fucosyl)-L-seryl-[EGF-like domain protein] + UDP-N-acetyl-alpha-D-glucosamine = 3-O-(N-acetyl-beta-D-glucosaminyl-(1-&gt;3)-alpha-L-fucosyl)-L-seryl-[EGF-like domain protein] + UDP + H(+). In terms of biological role, glycosyltransferase that initiates the elongation of O-linked fucose residues attached to EGF-like repeats in the extracellular domain of Notch molecules. Essential mediator of somite segmentation and patterning. May be involved in mesoderm development. In Xenopus laevis (African clawed frog), this protein is Beta-1,3-N-acetylglucosaminyltransferase lunatic fringe (lfng).